The primary structure comprises 803 residues: MINYYVYATDDSLSTNSDYYFNKNALQTLEQFQNEIENISSCDKVLYLHWSAYCRQKEIGDVKSRYLRRNGEGTDTRPSEFIKWIHKNINLLDGKLKLLYMVTDGQISKNEANVCKNLLNEKPFSFERIVFYAINNNTEQIDLSVASAFVNNSDCKIYRNDEMVEWVNLTKEFNYDIITTENFISKKDELLSFVRFKFINSMPTDANVLNEVDKLKRLRQRLFSEIKQTNNSSMNFDQIKNKNEFVNTFKSTEFYKTLYNADVLNFDKIIDSTISTAINYLHNRNKSYAFDVMKNLHYQNKLASVNAETDDVVANDDDEAYDYSNVENIRFPDCILANDSGVPAILLTHYNLFETIQGSLTKFKSRLEFPLLWSQNKEIKNSIEYCYNLESLKQLIQHGTRLSPRSRRPFTGAIVPNEQFDEYNDYVLACTYFDAKKVAFNAGLMYYLLYKHINDAEYIDDNVKDYFKRYVIYRINNTECMIGFSNLAMEPLIKVKLPTALWYVSEISTLLFKHDNQHFGKEKLRQFAHFAEDMLQILQWCDYTDVNVEAVKKRAYCLKRINMFKRMSVLDAVEWIANRAFECKDKFIINKLTNADALQDLKFLKVNHNGVVDEHVLNDTSINAERYLYFYHIIEDFDKYISVVDNTMRPAFVLEEGKTFYDSLLKQLQSVHFNGQEITFEKCSRLDFNRILSLHKLYIECVKSLNKYPTLEEYQNYVYNQKHVKFNRIAIFPENILQNLAAVHNEYANKIVNLPVEEFIVRANNTVNRITRIQNERVGSPLQAEEIDKLIKLSEQRVNICRK.

This Lepidoptera (butterflies and moths) protein is Early 94 kDa protein.